A 502-amino-acid polypeptide reads, in one-letter code: ATP synthase subunit alpha (502 aa).

The interval 115–137 (VDGLGPVETTETRPIESPAPGVM) is disordered. ATP is bound at residue 169–176 (GDRQTGKT).

It belongs to the ATPase alpha/beta chains family. F-type ATPases have 2 components, CF(1) - the catalytic core - and CF(0) - the membrane proton channel. CF(1) has five subunits: alpha(3), beta(3), gamma(1), delta(1), epsilon(1). CF(0) has three main subunits: a(1), b(2) and c(9-12). The alpha and beta chains form an alternating ring which encloses part of the gamma chain. CF(1) is attached to CF(0) by a central stalk formed by the gamma and epsilon chains, while a peripheral stalk is formed by the delta and b chains.

It localises to the cell membrane. It carries out the reaction ATP + H2O + 4 H(+)(in) = ADP + phosphate + 5 H(+)(out). Functionally, produces ATP from ADP in the presence of a proton gradient across the membrane. The alpha chain is a regulatory subunit. This chain is ATP synthase subunit alpha, found in Geobacillus kaustophilus (strain HTA426).